The following is a 1108-amino-acid chain: Transmembrane protein 132C (1108 aa).

An N-terminal signal peptide occupies residues 1–27 (MRSEGAAPGPAAPLCGALSLLLGALLG). The Extracellular segment spans residues 28-922 (KVIEGHGVTD…LVQTPRGLSD (895 aa)). N-linked (GlcNAc...) asparagine glycans are attached at residues Asn-316 and Asn-373. Positions 820–836 (HASDRRQKGQHHERTGQ) are enriched in basic and acidic residues. Positions 820 to 857 (HASDRRQKGQHHERTGQDGHLYGSSPVEREEGALRRAT) are disordered. The chain crosses the membrane as a helical span at residues 923–943 (LEIGMYALLGVFCLAILVFLI). Residues 944–1108 (NCATFALKYR…NYLEKLKDKA (165 aa)) are Cytoplasmic-facing. The segment at 1022 to 1072 (QSQIHRSADSGGRQGREQKQDPLHSPTSKRKKVKFTTFTTIPPDDSCPTVN) is disordered.

This sequence belongs to the TMEM132 family.

The protein resides in the membrane. In Homo sapiens (Human), this protein is Transmembrane protein 132C (TMEM132C).